The chain runs to 521 residues: Medium/long-chain-fatty-acid--[acyl-carrier-protein] ligase MbtM (521 aa).

Belongs to the ATP-dependent AMP-binding enzyme family.

The catalysed reaction is a long-chain fatty acid + holo-[ACP] + ATP = a long-chain fatty acyl-[ACP] + AMP + diphosphate. It carries out the reaction a medium-chain fatty acid + holo-[ACP] + ATP = a medium-chain fatty acyl-[ACP] + AMP + diphosphate. The protein operates within siderophore biosynthesis; mycobactin biosynthesis. Functionally, activates lipidic moieties required for mycobactin biosynthesis. Converts medium- to long-chain aliphatic fatty acids into acyl adenylate, which is further transferred on to the phosphopantetheine arm of the carrier protein MbtL. The protein is Medium/long-chain-fatty-acid--[acyl-carrier-protein] ligase MbtM (mbtM) of Mycobacterium tuberculosis (strain CDC 1551 / Oshkosh).